Consider the following 97-residue polypeptide: Protein YcgL (97 aa).

The YcgL domain maps to 1-85 (MLCVIYRSSK…PPEDLLKQHL (85 aa)).

This chain is Protein YcgL, found in Escherichia fergusonii (strain ATCC 35469 / DSM 13698 / CCUG 18766 / IAM 14443 / JCM 21226 / LMG 7866 / NBRC 102419 / NCTC 12128 / CDC 0568-73).